The following is a 569-amino-acid chain: Glutamate--tRNA ligase (569 aa).

The 'HIGH' region signature appears at 99-109 (PEPNGYPTLGH).

It belongs to the class-I aminoacyl-tRNA synthetase family. Glutamate--tRNA ligase type 2 subfamily.

It is found in the cytoplasm. It carries out the reaction tRNA(Glu) + L-glutamate + ATP = L-glutamyl-tRNA(Glu) + AMP + diphosphate. Its function is as follows. Catalyzes the attachment of glutamate to tRNA(Glu) in a two-step reaction: glutamate is first activated by ATP to form Glu-AMP and then transferred to the acceptor end of tRNA(Glu). In Korarchaeum cryptofilum (strain OPF8), this protein is Glutamate--tRNA ligase.